Here is a 38-residue protein sequence, read N- to C-terminus: Large ribosomal subunit protein bL36 (38 aa).

Belongs to the bacterial ribosomal protein bL36 family.

This chain is Large ribosomal subunit protein bL36, found in Cellvibrio japonicus (strain Ueda107) (Pseudomonas fluorescens subsp. cellulosa).